A 624-amino-acid chain; its full sequence is tRNA uridine 5-carboxymethylaminomethyl modification enzyme MnmG (624 aa).

FAD contacts are provided by residues 13–18, valine 125, and serine 180; that span reads GGGHAG. 273–287 provides a ligand contact to NAD(+); the sequence is GPRYCPSIEDKIVRF. Residue glutamine 370 coordinates FAD.

Belongs to the MnmG family. In terms of assembly, homodimer. Heterotetramer of two MnmE and two MnmG subunits. Requires FAD as cofactor.

The protein resides in the cytoplasm. NAD-binding protein involved in the addition of a carboxymethylaminomethyl (cmnm) group at the wobble position (U34) of certain tRNAs, forming tRNA-cmnm(5)s(2)U34. The protein is tRNA uridine 5-carboxymethylaminomethyl modification enzyme MnmG of Legionella pneumophila (strain Paris).